We begin with the raw amino-acid sequence, 465 residues long: Chromosomal replication initiator protein DnaA (465 aa).

Residues 1–80 (MLWTDCLTRL…VEILVDSRPG (80 aa)) are domain I, interacts with DnaA modulators. A domain II region spans residues 80–127 (GAILSPAEQPATTTAALSSTPVVPQRVKKEVVEPAATQSNKILNSKKR). Residues 128–345 (LLNPLFTFSL…GALNKVVAIA (218 aa)) are domain III, AAA+ region. ATP contacts are provided by Gly173, Gly175, Lys176, and Thr177. A domain IV, binds dsDNA region spans residues 346–465 (RFKGSQIDLD…YKNLLRLLQS (120 aa)).

This sequence belongs to the DnaA family. Oligomerizes as a right-handed, spiral filament on DNA at oriC.

It localises to the cytoplasm. Its function is as follows. Plays an essential role in the initiation and regulation of chromosomal replication. ATP-DnaA binds to the origin of replication (oriC) to initiate formation of the DNA replication initiation complex once per cell cycle. Binds the DnaA box (a 9 base pair repeat at the origin) and separates the double-stranded (ds)DNA. Forms a right-handed helical filament on oriC DNA; dsDNA binds to the exterior of the filament while single-stranded (ss)DNA is stabiized in the filament's interior. The ATP-DnaA-oriC complex binds and stabilizes one strand of the AT-rich DNA unwinding element (DUE), permitting loading of DNA polymerase. After initiation quickly degrades to an ADP-DnaA complex that is not apt for DNA replication. Binds acidic phospholipids. The chain is Chromosomal replication initiator protein DnaA from Acinetobacter baylyi (strain ATCC 33305 / BD413 / ADP1).